The following is a 298-amino-acid chain: Small ribosomal subunit biogenesis GTPase RsgA (298 aa).

The CP-type G domain occupies threonine 67 to leucine 228. Threonine 116–aspartate 119 contacts GTP. Threonine 166 is subject to Phosphothreonine. Glycine 171–serine 179 contacts GTP. Residues cysteine 252, cysteine 257, histidine 259, and cysteine 265 each coordinate Zn(2+).

This sequence belongs to the TRAFAC class YlqF/YawG GTPase family. RsgA subfamily. As to quaternary structure, monomer, but able to form dimers. Associates with 30S ribosomal subunit; a phospho-mimetic mutation increases association. Probably binds 16S rRNA. Zn(2+) serves as cofactor. In vitro phosphorylated mostly on Thr (with lower signal on Ser) by PrkC in the presence of poly-L-Lys or myelin basic protein, dephosphorylated by PrpC. Most in vitro phosphorylation occurs on Thr-166, in vivo phosphorylation has not been detected, but it might vary during the cell cycle.

Its subcellular location is the cytoplasm. In terms of biological role, one of several proteins that assist in the late maturation steps of the functional core of the 30S ribosomal subunit. Helps release RbfA from mature subunits. May play a role in the assembly of ribosomal proteins into the subunit. Circularly permuted GTPase with a low level of activity and slow catalytic turnover, does not act on ATP. GTPase activity is stimulated by the presence of 30S or 70S ribosomes, phosphorylation increases stimulation. Depletion results in increased sensitivity to protein synthesis inhibitors that block the peptide channel or peptidyl transferase center on the ribosome, suggesting this protein functions in conjunction with the ribosome in vivo. Decreasing levels of protein lead to an increase in free 30S and 50S ribosomal subunits and a decrease in assembled 70S ribosomes. Suggested to serve as a specific transcription factor for proteins involved in late stages of peptidoglycan synthesis. This is Small ribosomal subunit biogenesis GTPase RsgA from Bacillus subtilis (strain 168).